Reading from the N-terminus, the 244-residue chain is Proteasome subunit alpha type-5 (244 aa).

The protein belongs to the peptidase T1A family. As to quaternary structure, the 26S proteasome consists of a 20S proteasome core and two 19S regulatory subunits. The 20S proteasome core is composed of 28 subunits that are arranged in four stacked rings, resulting in a barrel-shaped structure. The two end rings are each formed by seven alpha subunits, and the two central rings are each formed by seven beta subunits. The catalytic chamber with the active sites is on the inside of the barrel.

The protein resides in the cytoplasm. The protein localises to the nucleus. In terms of biological role, the proteasome is a multicatalytic proteinase complex which is characterized by its ability to cleave peptides with Arg, Phe, Tyr, Leu, and Glu adjacent to the leaving group at neutral or slightly basic pH. The proteasome has an ATP-dependent proteolytic activity. This chain is Proteasome subunit alpha type-5 (Prosalpha5), found in Drosophila melanogaster (Fruit fly).